A 554-amino-acid chain; its full sequence is Endochitinase (554 aa).

Residues 1–19 (MRATLATLAVLALATAVQS) form the signal peptide. One can recognise a GH18 domain in the interval 23-398 (ARIVCYFSNW…KILHKHMSSY (376 aa)). An intrachain disulfide couples Cys27 to Cys52. Position 76-77 (76-77 (LD)) interacts with chitin. An N-linked (GlcNAc...) asparagine glycan is attached at Asn85. Residue 103–106 (GGWA) participates in chitin binding. Glu146 (proton donor) is an active-site residue. Chitin-binding positions include Tyr147 and 213-216 (MSYD). Asn303 carries N-linked (GlcNAc...) asparagine glycosylation. Trp370 is a binding site for chitin. The disordered stretch occupies residues 398 to 494 (YTVPPPHTEN…VPPTENEVDG (97 aa)). The segment covering 431–457 (PTTTTAKPASTTKTTVKTTTTTTAKPP) has biased composition (low complexity). Basic and acidic residues predominate over residues 467–477 (INVRPEPKPEP). The Chitin-binding type-2 domain occupies 495 to 553 (SEICNSDQDYIPDKKHCDKYWRCVNGEAMQFSCQHGTVFNVELNVCDWPSNATRRECQQ). Cysteines 527 and 540 form a disulfide. An N-linked (GlcNAc...) asparagine glycan is attached at Asn545.

Belongs to the glycosyl hydrolase 18 family. Chitinase class II subfamily. Epidermis and gut.

Its subcellular location is the secreted. The enzyme catalyses Random endo-hydrolysis of N-acetyl-beta-D-glucosaminide (1-&gt;4)-beta-linkages in chitin and chitodextrins.. Its function is as follows. Digests chitin in the exoskeleton during the molting process. This chain is Endochitinase, found in Manduca sexta (Tobacco hawkmoth).